The chain runs to 371 residues: Queuine tRNA-ribosyltransferase (371 aa).

Catalysis depends on Asp-89, which acts as the Proton acceptor. Residues 89–93, Asp-143, Gln-185, and Gly-212 each bind substrate; that span reads DSGGF. The segment at 243 to 249 is RNA binding; it reads GVGKPED. Asp-262 acts as the Nucleophile in catalysis. An RNA binding; important for wobble base 34 recognition region spans residues 267–271; that stretch reads TRNAR. Residues Cys-300, Cys-302, Cys-305, and His-331 each coordinate Zn(2+).

This sequence belongs to the queuine tRNA-ribosyltransferase family. In terms of assembly, homodimer. Within each dimer, one monomer is responsible for RNA recognition and catalysis, while the other monomer binds to the replacement base PreQ1. Requires Zn(2+) as cofactor.

The catalysed reaction is 7-aminomethyl-7-carbaguanine + guanosine(34) in tRNA = 7-aminomethyl-7-carbaguanosine(34) in tRNA + guanine. It participates in tRNA modification; tRNA-queuosine biosynthesis. Functionally, catalyzes the base-exchange of a guanine (G) residue with the queuine precursor 7-aminomethyl-7-deazaguanine (PreQ1) at position 34 (anticodon wobble position) in tRNAs with GU(N) anticodons (tRNA-Asp, -Asn, -His and -Tyr). Catalysis occurs through a double-displacement mechanism. The nucleophile active site attacks the C1' of nucleotide 34 to detach the guanine base from the RNA, forming a covalent enzyme-RNA intermediate. The proton acceptor active site deprotonates the incoming PreQ1, allowing a nucleophilic attack on the C1' of the ribose to form the product. After dissociation, two additional enzymatic reactions on the tRNA convert PreQ1 to queuine (Q), resulting in the hypermodified nucleoside queuosine (7-(((4,5-cis-dihydroxy-2-cyclopenten-1-yl)amino)methyl)-7-deazaguanosine). This Azotobacter vinelandii (strain DJ / ATCC BAA-1303) protein is Queuine tRNA-ribosyltransferase.